A 229-amino-acid polypeptide reads, in one-letter code: MTTPLTWHDVLADEKQQPYFLNTLKTVAEERQSGITIYPPQKDVFNAFRFTELGDVKVVILGQDPYHGPGQAHGLAFSVRPGVAIPPSLLNMYKELEATIPGFTRPTHGYLESWARQGVLLLNTVLTVRAGQAHSHASLGWETFTDKVIALINEHCEGVVFLLWGSHAQKKGAIIDRQRHCVLKAPHPSPLSAHRGFFGCNHFVQTNQWLVDRGETPIDWMPVLPAESE.

Asp-64 serves as the catalytic Proton acceptor.

This sequence belongs to the uracil-DNA glycosylase (UDG) superfamily. UNG family.

The protein resides in the cytoplasm. The enzyme catalyses Hydrolyzes single-stranded DNA or mismatched double-stranded DNA and polynucleotides, releasing free uracil.. Excises uracil residues from the DNA which can arise as a result of misincorporation of dUMP residues by DNA polymerase or due to deamination of cytosine. The protein is Uracil-DNA glycosylase of Klebsiella pneumoniae subsp. pneumoniae (strain ATCC 700721 / MGH 78578).